We begin with the raw amino-acid sequence, 371 residues long: Glutamate 5-kinase (371 aa).

K10 serves as a coordination point for ATP. Substrate is bound by residues S50, D137, and N149. Residues S169 to D170 and T208 to K214 each bind ATP. The PUA domain occupies Q274–D352.

Belongs to the glutamate 5-kinase family.

It is found in the cytoplasm. The enzyme catalyses L-glutamate + ATP = L-glutamyl 5-phosphate + ADP. It functions in the pathway amino-acid biosynthesis; L-proline biosynthesis; L-glutamate 5-semialdehyde from L-glutamate: step 1/2. Functionally, catalyzes the transfer of a phosphate group to glutamate to form L-glutamate 5-phosphate. This is Glutamate 5-kinase from Dictyoglomus thermophilum (strain ATCC 35947 / DSM 3960 / H-6-12).